The following is a 202-amino-acid chain: Inner membrane-spanning protein YciB (202 aa).

5 consecutive transmembrane segments (helical) span residues isoleucine 47–phenylalanine 67, methionine 75–asparagine 95, tryptophan 101–leucine 121, leucine 146–phenylalanine 166, and phenylalanine 174–leucine 194.

This sequence belongs to the YciB family.

The protein localises to the cell inner membrane. In terms of biological role, plays a role in cell envelope biogenesis, maintenance of cell envelope integrity and membrane homeostasis. The chain is Inner membrane-spanning protein YciB from Dechloromonas aromatica (strain RCB).